Here is a 1065-residue protein sequence, read N- to C-terminus: Probable arabinosyltransferase B (1065 aa).

12 consecutive transmembrane segments (helical) span residues Trp15–Val37, Leu204–Leu226, Asn241–Gly263, Tyr394–Val413, Gly417–Val436, Val441–Phe463, Phe510–Leu527, Ala540–Thr557, Leu567–Gly589, Ala596–Val618, Gly633–Leu655, and Leu667–Ala689.

It belongs to the emb family.

The protein resides in the cell membrane. In terms of biological role, arabinosyl transferase responsible for the polymerization of arabinose into the arabinan of arabinogalactan. The polypeptide is Probable arabinosyltransferase B (embB) (Mycobacterium avium).